Reading from the N-terminus, the 340-residue chain is Ferrochelatase (340 aa).

Residues H189 and E292 each contribute to the Fe cation site.

It belongs to the ferrochelatase family.

The protein localises to the cytoplasm. It catalyses the reaction heme b + 2 H(+) = protoporphyrin IX + Fe(2+). It functions in the pathway porphyrin-containing compound metabolism; protoheme biosynthesis; protoheme from protoporphyrin-IX: step 1/1. Functionally, catalyzes the ferrous insertion into protoporphyrin IX. The polypeptide is Ferrochelatase (Pseudomonas fluorescens (strain ATCC BAA-477 / NRRL B-23932 / Pf-5)).